Reading from the N-terminus, the 390-residue chain is Nuclear receptor subfamily 2 group F member 6 (390 aa).

The span at 1 to 15 (MAMVTGGWGDPGGDT) shows a compositional bias: gly residues. Residues 1-50 (MAMVTGGWGDPGGDTNGVDKAGGSYPRATEDDSASPPGATSDAEPGDEER) are disordered. Residues serine 35 and serine 41 each carry the phosphoserine modification. Residues 54–129 (QVDCVVCGDK…VGMRKEAVQR (76 aa)) constitute a DNA-binding region (nuclear receptor). The NR C4-type zinc finger occupies 57–77 (CVVCGDKSSGKHYGVFTCEGC). Serine 84 carries the phosphoserine modification. The NR C4-type zinc-finger motif lies at 93–117 (CRSNRDCQIDQHHRNQCQYCRLKKC). In terms of domain architecture, NR LBD spans 157–380 (PVSELIAQLL…TLIRDMLLSG (224 aa)). The segment at 314 to 390 (LQEKAQVALT…STFNWPYGSG (77 aa)) is important for dimerization.

It belongs to the nuclear hormone receptor family. NR2 subfamily. Binds DNA as dimer; homodimer and heterodimer with NR2F2 and probably NR2F1. Interacts with THRB.

It localises to the nucleus. Functionally, transcription factor predominantly involved in transcriptional repression. Binds to promoter/enhancer response elements that contain the imperfect 5'-AGGTCA-3' direct or inverted repeats with various spacings which are also recognized by other nuclear hormone receptors. Involved in modulation of hormonal responses. Represses transcriptional activity of the lutropin-choriogonadotropic hormone receptor/LHCGR gene, the renin/REN gene and the oxytocin-neurophysin/OXT gene. Represses the triiodothyronine-dependent and -independent transcriptional activity of the thyroid hormone receptor gene in a cell type-specific manner. The corepressing function towards thyroid hormone receptor beta/THRB involves at least in part the inhibition of THRB binding to triiodothyronine response elements (TREs) by NR2F6. Inhibits NFATC transcription factor DNA binding and subsequently its transcriptional activity. Acts as transcriptional repressor of IL-17 expression in Th-17 differentiated CD4(+) T cells and may be involved in induction and/or maintenance of peripheral immunological tolerance and autoimmunity. Involved in development of forebrain circadian clock; is required early in the development of the locus coeruleus (LC). The sequence is that of Nuclear receptor subfamily 2 group F member 6 (Nr2f6) from Mus musculus (Mouse).